Here is a 161-residue protein sequence, read N- to C-terminus: NAD(P)H-quinone oxidoreductase subunit I, chloroplastic (161 aa).

4Fe-4S ferredoxin-type domains follow at residues glycine 55–lysine 84 and leucine 95–glutamate 124. 8 residues coordinate [4Fe-4S] cluster: cysteine 64, cysteine 67, cysteine 70, cysteine 74, cysteine 104, cysteine 107, cysteine 110, and cysteine 114.

The protein belongs to the complex I 23 kDa subunit family. NDH is composed of at least 16 different subunits, 5 of which are encoded in the nucleus. [4Fe-4S] cluster is required as a cofactor.

The protein localises to the plastid. Its subcellular location is the chloroplast thylakoid membrane. It catalyses the reaction a plastoquinone + NADH + (n+1) H(+)(in) = a plastoquinol + NAD(+) + n H(+)(out). It carries out the reaction a plastoquinone + NADPH + (n+1) H(+)(in) = a plastoquinol + NADP(+) + n H(+)(out). In terms of biological role, NDH shuttles electrons from NAD(P)H:plastoquinone, via FMN and iron-sulfur (Fe-S) centers, to quinones in the photosynthetic chain and possibly in a chloroplast respiratory chain. The immediate electron acceptor for the enzyme in this species is believed to be plastoquinone. Couples the redox reaction to proton translocation, and thus conserves the redox energy in a proton gradient. This Phaseolus vulgaris (Kidney bean) protein is NAD(P)H-quinone oxidoreductase subunit I, chloroplastic.